Consider the following 93-residue polypeptide: Co-chaperonin GroES (93 aa).

The protein belongs to the GroES chaperonin family. In terms of assembly, heptamer of 7 subunits arranged in a ring. Interacts with the chaperonin GroEL.

It is found in the cytoplasm. Its function is as follows. Together with the chaperonin GroEL, plays an essential role in assisting protein folding. The GroEL-GroES system forms a nano-cage that allows encapsulation of the non-native substrate proteins and provides a physical environment optimized to promote and accelerate protein folding. GroES binds to the apical surface of the GroEL ring, thereby capping the opening of the GroEL channel. The protein is Co-chaperonin GroES of Streptococcus intermedius.